The following is an 86-amino-acid chain: DNA replication protein 1 (86 aa).

Residues 38 to 67 (LELEKKMTKLEHENKLMKNALYELSRMENN) adopt a coiled-coil conformation.

The protein belongs to the phi29likevirus DNA replication protein 1 family. As to quaternary structure, homomultimer. Self-associates into large complexes forming long filamentous structures. Interacts (via N-terminus) with the primer terminal protein. Interacts with host FtsZ protein.

Its subcellular location is the host membrane. Functionally, protein that assembles into highly ordered structures and provides a specific site for viral DNA replication. Probably anchors the viral DNA replisome to the host membrane. This is DNA replication protein 1 (1) from Bacillus subtilis (Bacteriophage phi-29).